The following is a 164-amino-acid chain: Cyclic pyranopterin monophosphate synthase (164 aa).

Substrate is bound by residues 75-77 (MCH) and 116-117 (ME). The active site involves aspartate 131.

Belongs to the MoaC family. In terms of assembly, homohexamer; trimer of dimers.

It carries out the reaction (8S)-3',8-cyclo-7,8-dihydroguanosine 5'-triphosphate = cyclic pyranopterin phosphate + diphosphate. It functions in the pathway cofactor biosynthesis; molybdopterin biosynthesis. Its function is as follows. Catalyzes the conversion of (8S)-3',8-cyclo-7,8-dihydroguanosine 5'-triphosphate to cyclic pyranopterin monophosphate (cPMP). The chain is Cyclic pyranopterin monophosphate synthase from Staphylococcus aureus (strain bovine RF122 / ET3-1).